We begin with the raw amino-acid sequence, 481 residues long: Velvet complex subunit B (481 aa).

Disordered stretches follow at residues 1–157 and 241–339; these read MNSA…YSKI and GTGA…NGYG. Pro residues-rich tracts occupy residues 36–45, 53–62, and 96–112; these read HPPPPLPPPS, PPLPPPPSAP, and PYAP…QYPR. One can recognise a Velvet domain in the interval 160–464; sequence GSGWKYSLDV…ANQGIKIPIR (305 aa). Low complexity-rich tracts occupy residues 241–255 and 293–325; these read GTGA…TYSS and QQSY…SAEP.

Belongs to the velvet family. VelB subfamily. Component of the heterotrimeric velvet complex composed of laeA, veA and velB; VeA acting as a bridging protein between laeA and velB. Forms a heterodimeric complex with vosA; the formation of the velB-vosA complex is light-dependent.

The protein resides in the nucleus. It is found in the cytoplasm. Component of the velvet transcription factor complex that controls sexual/asexual developmental ratio in response to light, promoting sexual development in the darkness while stimulating asexual sporulation under illumination. The velvet complex acts as a global regulator for secondary metabolite gene expression. Component of the velB-VosA heterodimeric complex that plays a dual role in activating genes associated with spore maturation and repressing certain development-associated genes. The velB-VosA complex binds DNA through the DNA-binding domain of vosA that recognizes an 11-nucleotide consensus sequence 5'-CTGGCCGCGGC-3' consisting of two motifs in the promoters of key developmental regulatory genes. Controls the biosynthetic gene cluster for beauvericin, a depsipeptide mycotoxin that functions as a virulence determinant. Also regulates chromatin structure and transcription of siderophore biosynthetic genes and is required for infection of tomato plants. This is Velvet complex subunit B from Fusarium oxysporum f. sp. lycopersici (strain 4287 / CBS 123668 / FGSC 9935 / NRRL 34936) (Fusarium vascular wilt of tomato).